Consider the following 970-residue polypeptide: Vacuolar membrane protease (970 aa).

Over residues 1–12 the composition is skewed to polar residues; that stretch reads MTTADSNSSATR. The tract at residues 1–35 is disordered; sequence MTTADSNSSATRGSHEMADGSNRVPNDEPYHRKSP. The Cytoplasmic portion of the chain corresponds to 1-56; sequence MTTADSNSSATRGSHEMADGSNRVPNDEPYHRKSPESCENANFFVRAMRASFGYRK. Positions 25-35 are enriched in basic and acidic residues; sequence PNDEPYHRKSP. Residues 57–77 form a helical membrane-spanning segment; the sequence is TSLTILVFLSVIATVLLSYYD. At 78–397 the chain is on the vacuolar side; the sequence is SSLEFSVSLP…FVVPMTFVFG (320 aa). Residues asparagine 146 and asparagine 173 are each glycosylated (N-linked (GlcNAc...) asparagine). Residues histidine 187 and aspartate 199 each coordinate Zn(2+). The active-site Proton acceptor is glutamate 234. Zn(2+) contacts are provided by glutamate 235, glutamate 260, and histidine 333. The chain crosses the membrane as a helical span at residues 398–418; that stretch reads VNVLLMVLVPLVSLISLALIF. The Cytoplasmic portion of the chain corresponds to 419–423; that stretch reads AHRKW. Residues 424–444 traverse the membrane as a helical segment; that stretch reads SVSLVTFFKFPLSFILSIFLL. Residues 445 to 465 are Vacuolar-facing; it reads DNFSSWFVVSVNNFLPNSSAG. N-linked (GlcNAc...) asparagine glycans are attached at residues asparagine 446 and asparagine 461. A helical transmembrane segment spans residues 466 to 486; sequence IIALTYFSFFVLANYLLLNGI. At 487-502 the chain is on the cytoplasmic side; sequence NLLFWKFKGTRHDEKL. A helical membrane pass occupies residues 503-523; it reads VVILQISFMFWVSLIWSTANI. Residues 524–535 lie on the Vacuolar side of the membrane; that stretch reads AKSQFNGEHSGE. The chain crosses the membrane as a helical span at residues 536–556; sequence FLLTLLYILQAAGGVFGLLCW. The Cytoplasmic segment spans residues 557 to 620; it reads LFKRSRTVHT…PTKHYSYDWS (64 aa). A helical membrane pass occupies residues 621–641; the sequence is IQFLFIVPISSFLSYNYGWLI. Topologically, residues 642–658 are vacuolar; sequence LEGLKKTLQESATSEYL. Residues 659-679 form a helical membrane-spanning segment; that stretch reads VFRALKLLAVVVAVPYLPFIF. The Cytoplasmic portion of the chain corresponds to 680 to 683; that stretch reads KVNR. Residues 684-704 form a helical membrane-spanning segment; that stretch reads IVFLVTIFLFVYGLGAIVISE. Residues 705–970 lie on the Vacuolar side of the membrane; that stretch reads PFTEANPLKL…LVNVKKSVLV (266 aa). N-linked (GlcNAc...) asparagine glycosylation is found at asparagine 738, asparagine 797, and asparagine 877.

This sequence belongs to the peptidase M28 family. The cofactor is Zn(2+).

The protein resides in the vacuole membrane. May be involved in vacuolar sorting and osmoregulation. This chain is Vacuolar membrane protease, found in Meyerozyma guilliermondii (strain ATCC 6260 / CBS 566 / DSM 6381 / JCM 1539 / NBRC 10279 / NRRL Y-324) (Yeast).